Consider the following 535-residue polypeptide: ATP-dependent RNA helicase DBP3 (535 aa).

Basic and acidic residues predominate over residues 1-21; the sequence is MSKHELKDKKRKSVDGEDVSK. The segment at 1–82 is disordered; the sequence is MSKHELKDKK…GSETAPVGDS (82 aa). Positions 22–33 are enriched in basic residues; it reads SKKVKKDKKDKK. Basic and acidic residues predominate over residues 34 to 72; it reads DKKAKDGNDKVKDKKDKNKKDKSKTDKNLKEVQETEAHT. The short motif at 125–151 is the Q motif element; that stretch reads LSFSHLNLHSAIQKEISKFPKPTPIQA. One can recognise a Helicase ATP-binding domain in the interval 154–327; it reads WPYLLAGKDV…STFMRAPVKV (174 aa). 167–174 contributes to the ATP binding site; it reads AETGSGKT. The DEAD box signature appears at 274-277; the sequence is DEAD. The 154-residue stretch at 352–505 folds into the Helicase C-terminal domain; the sequence is KKEKRLLELL…PVPEELMKFG (154 aa).

Belongs to the DEAD box helicase family. DDX5/DBP2 subfamily.

It localises to the nucleus. The protein resides in the nucleolus. The catalysed reaction is ATP + H2O = ADP + phosphate + H(+). ATP-dependent RNA helicase required for 60S ribosomal subunit synthesis. Involved in efficient pre-rRNA processing, predominantly at site A3, which is necessary for the normal formation of 25S and 5.8S rRNAs. The chain is ATP-dependent RNA helicase DBP3 (DBP3) from Eremothecium gossypii (strain ATCC 10895 / CBS 109.51 / FGSC 9923 / NRRL Y-1056) (Yeast).